The sequence spans 345 residues: NADPH-dependent oxidoreductase 2-alkenal reductase (345 aa).

Residues 52 to 53, 163 to 169, glycine 188, lysine 192, tyrosine 208, asparagine 232, cysteine 254, tyrosine 260, 284 to 286, phenylalanine 330, and 334 to 336 contribute to the NADP(+) site; these read PY, AASGAVG, FVV, and NVG. Tyrosine 53 is a substrate binding site. Position 260 (tyrosine 260) interacts with substrate.

It belongs to the NADP-dependent oxidoreductase L4BD family. As to quaternary structure, homodimer. In terms of tissue distribution, expressed in leaves.

It is found in the cytoplasm. The protein localises to the nucleus. It localises to the nucleoplasm. The enzyme catalyses an n-alkanal + NAD(+) = an alk-2-enal + NADH + H(+). It carries out the reaction an n-alkanal + NADP(+) = an alk-2-enal + NADPH + H(+). With respect to regulation, inhibited by N-ethylmaleimide and p-chloromercuribenzoic acid. Its function is as follows. Involved in the detoxification of reactive carbonyls. Acts on lipid peroxide-derived reactive aldehydes. Specific to a double bond activated by an adjacent carbonyl group. Can use both quinones and diamide as substrates, but not menadione, ferricyanide or phylloquinone. Can use 4-hydroxy-(2E)-nonenal (HNE), 4-hydroxy-(2E)-hexenal (HHE), (2E)-nonenal, (2E)-hexenal, (2E)-pentenal, propenal (acrolein), 3-buten-2-one and 3-penten-2-one, but not (R)-(-)-carvone, n-nonanal, n-hexanal, (3Z)-hexanal, cyclohex-2-en-1-one or 12-oxo phytodienoic acid (OPDA) as electron acceptors. Catalyzes the reduction of the alpha,beta-unsaturated bond of 2-alkenals, of lipid peroxide-derived oxenes 9-oxo-10(E),12(Z)-octadecadienoic acid (9-KODE) and 13-oxo-9(Z),11(E)-octadecadienoic acid (13-KODE), as well as 4-oxo-(2E)-nonenal and 4-hydroxynonenal. Can use 12-oxo-10(E) dodecanoate (traumatin), trans-1,3 diphenyl-2-propenone, trans-1,4-diphenyl-2-butene-1,4-dione, 9-oxo-12,13-epoxy-(10E)-octadecenoic acid (trans-EKODE-1b) and 9,13-dihydroxy-10-oxo-11-octadecenoic acid as substrates. Catalyzes the reduction of the 7-8 double bond of phenylpropanal substrates, such as p-coumaryl aldehyde and coniferyl aldehyde (in vitro). Has activity towards toxic substrates, such as 4-hydroxy-(2E)-nonenal (in vitro). May play a distinct role in plant antioxidant defense and is possibly involved in NAD(P)/NAD(P)H homeostasis. The protein is NADPH-dependent oxidoreductase 2-alkenal reductase of Arabidopsis thaliana (Mouse-ear cress).